A 183-amino-acid chain; its full sequence is ATP synthase subunit b, chloroplastic (183 aa).

The helical transmembrane segment at 25 to 45 (DILATNLINLTVVVGVLIFFG) threads the bilayer.

This sequence belongs to the ATPase B chain family. F-type ATPases have 2 components, F(1) - the catalytic core - and F(0) - the membrane proton channel. F(1) has five subunits: alpha(3), beta(3), gamma(1), delta(1), epsilon(1). F(0) has four main subunits: a(1), b(1), b'(1) and c(10-14). The alpha and beta chains form an alternating ring which encloses part of the gamma chain. F(1) is attached to F(0) by a central stalk formed by the gamma and epsilon chains, while a peripheral stalk is formed by the delta, b and b' chains.

It is found in the plastid. It localises to the chloroplast thylakoid membrane. Its function is as follows. F(1)F(0) ATP synthase produces ATP from ADP in the presence of a proton or sodium gradient. F-type ATPases consist of two structural domains, F(1) containing the extramembraneous catalytic core and F(0) containing the membrane proton channel, linked together by a central stalk and a peripheral stalk. During catalysis, ATP synthesis in the catalytic domain of F(1) is coupled via a rotary mechanism of the central stalk subunits to proton translocation. Component of the F(0) channel, it forms part of the peripheral stalk, linking F(1) to F(0). The protein is ATP synthase subunit b, chloroplastic of Saccharum hybrid (Sugarcane).